Reading from the N-terminus, the 75-residue chain is Ribonuclease pancreatic (75 aa).

2 disulfide bridges follow: Cys7-Cys65 and Cys46-Cys53. Asn15 is a glycosylation site (N-linked (GlcNAc...) asparagine). Residues 22-26 (KPVNT), Lys47, and Arg66 contribute to the substrate site.

This sequence belongs to the pancreatic ribonuclease family. As to quaternary structure, monomer. Interacts with and forms tight 1:1 complexes with RNH1. Dimerization of two such complexes may occur. Interaction with RNH1 inhibits this protein. In terms of tissue distribution, pancreas.

It is found in the secreted. It carries out the reaction an [RNA] containing cytidine + H2O = an [RNA]-3'-cytidine-3'-phosphate + a 5'-hydroxy-ribonucleotide-3'-[RNA].. It catalyses the reaction an [RNA] containing uridine + H2O = an [RNA]-3'-uridine-3'-phosphate + a 5'-hydroxy-ribonucleotide-3'-[RNA].. Endonuclease that catalyzes the cleavage of RNA on the 3' side of pyrimidine nucleotides. Acts on single-stranded and double-stranded RNA. The sequence is that of Ribonuclease pancreatic (rnase1) from Oryx leucoryx (Arabian oryx).